Reading from the N-terminus, the 427-residue chain is Trigger factor (427 aa).

One can recognise a PPIase FKBP-type domain in the interval 165–250; it reads GDTVVIDFEG…LHEIQEQVPA (86 aa).

The protein belongs to the FKBP-type PPIase family. Tig subfamily.

It localises to the cytoplasm. It carries out the reaction [protein]-peptidylproline (omega=180) = [protein]-peptidylproline (omega=0). In terms of biological role, involved in protein export. Acts as a chaperone by maintaining the newly synthesized protein in an open conformation. Functions as a peptidyl-prolyl cis-trans isomerase. In Sulfurovum sp. (strain NBC37-1), this protein is Trigger factor.